We begin with the raw amino-acid sequence, 32 residues long: Fibrinolytic enzyme 2 (32 aa).

In terms of domain architecture, Peptidase S8 spans 1 to 32 (ISGTSMSCPHVAGRAYVLDTSLRVYLLDTGLR). Residue Ser-5 is the Charge relay system of the active site.

This sequence belongs to the peptidase S8 family.

Inhibited by PMSF. Not inhibited by benzamidine, aprotinin, SBTI, EDTA, EGTA, 2-mercaptoethanol, iodoacetic acid or pepstatin A. Functionally, serine protease. Has fibrinolytic and fibrinogenolytic but no plasminogenolytic activity. Cleaves after Arg and Lys residues. Cleaves fibrinogen alpha chain, beta chain and gamma chain in that order. This chain is Fibrinolytic enzyme 2, found in Hediste japonica (Polychaete worm).